Consider the following 380-residue polypeptide: Peroxisomal membrane protein PEX13 (380 aa).

Residues Met1–Gly30 are disordered. Residues Met1–Lys230 are Lumenal-facing. Residues Lys12 to Gly30 are compositionally biased toward polar residues. The helical transmembrane segment at Pro231–Ala251 threads the bilayer. Over His252 to Thr380 the chain is Cytoplasmic. One can recognise an SH3 domain in the interval Thr277–Arg344.

This sequence belongs to the peroxin-13 family. In terms of assembly, interacts (via SH3 domain) with PEX14 (via SH3-binding motif); forming the PEX13-PEX14 docking complex.

It is found in the peroxisome membrane. Functionally, component of the PEX13-PEX14 docking complex, a translocon channel that specifically mediates the import of peroxisomal cargo proteins bound to PEX5 receptor. The PEX13-PEX14 docking complex forms a large import pore which can be opened to a diameter of about 9 nm. Mechanistically, PEX5 receptor along with cargo proteins associates with the PEX14 subunit of the PEX13-PEX14 docking complex in the cytosol, leading to the insertion of the receptor into the organelle membrane with the concomitant translocation of the cargo into the peroxisome matrix. The chain is Peroxisomal membrane protein PEX13 (PEX13) from Komagataella pastoris (Yeast).